The primary structure comprises 203 residues: Glycerol-3-phosphate acyltransferase (203 aa).

Transmembrane regions (helical) follow at residues 6 to 26 (LTLL…AVLV), 82 to 102 (AISL…PIFF), 118 to 138 (APIG…LLLI), and 141 to 161 (YSSL…WWLD).

It belongs to the PlsY family. Probably interacts with PlsX.

The protein localises to the cell inner membrane. The enzyme catalyses an acyl phosphate + sn-glycerol 3-phosphate = a 1-acyl-sn-glycero-3-phosphate + phosphate. It participates in lipid metabolism; phospholipid metabolism. Functionally, catalyzes the transfer of an acyl group from acyl-phosphate (acyl-PO(4)) to glycerol-3-phosphate (G3P) to form lysophosphatidic acid (LPA). This enzyme utilizes acyl-phosphate as fatty acyl donor, but not acyl-CoA or acyl-ACP. The chain is Glycerol-3-phosphate acyltransferase from Shewanella putrefaciens (strain CN-32 / ATCC BAA-453).